We begin with the raw amino-acid sequence, 541 residues long: Chaperonin GroEL 2 (541 aa).

ATP is bound by residues 30-33, K51, 87-91, G415, and D496; these read TLGP and DGTTT.

This sequence belongs to the chaperonin (HSP60) family. In terms of assembly, forms a cylinder of 14 subunits composed of two heptameric rings stacked back-to-back. Interacts with the co-chaperonin GroES.

It is found in the cytoplasm. The catalysed reaction is ATP + H2O + a folded polypeptide = ADP + phosphate + an unfolded polypeptide.. Together with its co-chaperonin GroES, plays an essential role in assisting protein folding. The GroEL-GroES system forms a nano-cage that allows encapsulation of the non-native substrate proteins and provides a physical environment optimized to promote and accelerate protein folding. This Bradyrhizobium sp. (strain BTAi1 / ATCC BAA-1182) protein is Chaperonin GroEL 2.